The sequence spans 103 residues: Large ribosomal subunit protein bL21 (103 aa).

It belongs to the bacterial ribosomal protein bL21 family. As to quaternary structure, part of the 50S ribosomal subunit. Contacts protein L20.

Its function is as follows. This protein binds to 23S rRNA in the presence of protein L20. In Pectobacterium atrosepticum (strain SCRI 1043 / ATCC BAA-672) (Erwinia carotovora subsp. atroseptica), this protein is Large ribosomal subunit protein bL21.